A 286-amino-acid polypeptide reads, in one-letter code: uncharacterized protein (286 aa).

In terms of domain architecture, Radical SAM core spans 36–256 (ENPQHHPSIE…IKGCLLVQLK (221 aa)). Cysteine 50, cysteine 54, and cysteine 57 together coordinate [4Fe-4S] cluster.

Requires [4Fe-4S] cluster as cofactor.

This is an uncharacterized protein from Methanocaldococcus jannaschii (strain ATCC 43067 / DSM 2661 / JAL-1 / JCM 10045 / NBRC 100440) (Methanococcus jannaschii).